A 99-amino-acid polypeptide reads, in one-letter code: SAGA-associated factor 11 (99 aa).

The segment at 71–92 (FYCENCGREVSGNRFAAHLQRC) adopts an SGF11-type zinc-finger fold.

Belongs to the SGF11 family. Component of the 1.8 MDa SAGA transcription coactivator-HAT complex. SAGA is built of 5 distinct domains with specialized functions. Within the SAGA complex, SUS1, SGF11, SGF73 and UBP8 form an additional subcomplex of SAGA called the DUB module (deubiquitination module). Interacts directly with SGF73, SUS1 and UBP8.

Its subcellular location is the nucleus. Functions as a component of the transcription regulatory histone acetylation (HAT) complex SAGA. At the promoters, SAGA is required for recruitment of the basal transcription machinery. It influences RNA polymerase II transcriptional activity through different activities such as TBP interaction and promoter selectivity, interaction with transcription activators, and chromatin modification through histone acetylation and deubiquitination. SAGA acetylates nucleosomal histone H3 to some extent (to form H3K9ac, H3K14ac, H3K18ac and H3K23ac). SAGA interacts with DNA via upstream activating sequences (UASs). Involved in transcriptional regulation of a subset of SAGA-regulated genes. Within the SAGA complex, participates in a subcomplex, that specifically deubiquitinates histones H2B. The protein is SAGA-associated factor 11 of Candida glabrata (strain ATCC 2001 / BCRC 20586 / JCM 3761 / NBRC 0622 / NRRL Y-65 / CBS 138) (Yeast).